A 737-amino-acid polypeptide reads, in one-letter code: Phosphoribosylformylglycinamidine synthase subunit PurL (737 aa).

The active site involves His-48. Residues Tyr-51 and Lys-90 each contribute to the ATP site. Glu-92 serves as a coordination point for Mg(2+). Residues 93–96 (SHNH) and Arg-115 each bind substrate. Catalysis depends on His-94, which acts as the Proton acceptor. Residue Asp-116 participates in Mg(2+) binding. Gln-244 is a binding site for substrate. A Mg(2+)-binding site is contributed by Asp-272. 316–318 (ESQ) serves as a coordination point for substrate. Asp-500 and Gly-537 together coordinate ATP. A Mg(2+)-binding site is contributed by Asn-538. Ser-540 contacts substrate.

Belongs to the FGAMS family. Monomer. Part of the FGAM synthase complex composed of 1 PurL, 1 PurQ and 2 PurS subunits.

Its subcellular location is the cytoplasm. The catalysed reaction is N(2)-formyl-N(1)-(5-phospho-beta-D-ribosyl)glycinamide + L-glutamine + ATP + H2O = 2-formamido-N(1)-(5-O-phospho-beta-D-ribosyl)acetamidine + L-glutamate + ADP + phosphate + H(+). It functions in the pathway purine metabolism; IMP biosynthesis via de novo pathway; 5-amino-1-(5-phospho-D-ribosyl)imidazole from N(2)-formyl-N(1)-(5-phospho-D-ribosyl)glycinamide: step 1/2. In terms of biological role, part of the phosphoribosylformylglycinamidine synthase complex involved in the purines biosynthetic pathway. Catalyzes the ATP-dependent conversion of formylglycinamide ribonucleotide (FGAR) and glutamine to yield formylglycinamidine ribonucleotide (FGAM) and glutamate. The FGAM synthase complex is composed of three subunits. PurQ produces an ammonia molecule by converting glutamine to glutamate. PurL transfers the ammonia molecule to FGAR to form FGAM in an ATP-dependent manner. PurS interacts with PurQ and PurL and is thought to assist in the transfer of the ammonia molecule from PurQ to PurL. The polypeptide is Phosphoribosylformylglycinamidine synthase subunit PurL (Sulfurimonas denitrificans (strain ATCC 33889 / DSM 1251) (Thiomicrospira denitrificans (strain ATCC 33889 / DSM 1251))).